Consider the following 198-residue polypeptide: Ribonuclease HII (198 aa).

Residues 6-198 (EQIAGVDEVG…APCQASLLPD (193 aa)) enclose the RNase H type-2 domain. Residues aspartate 12, glutamate 13, and aspartate 108 each coordinate a divalent metal cation.

It belongs to the RNase HII family. Mn(2+) serves as cofactor. It depends on Mg(2+) as a cofactor.

It localises to the cytoplasm. The enzyme catalyses Endonucleolytic cleavage to 5'-phosphomonoester.. Its function is as follows. Endonuclease that specifically degrades the RNA of RNA-DNA hybrids. In Acaryochloris marina (strain MBIC 11017), this protein is Ribonuclease HII.